The following is a 254-amino-acid chain: Dolichol-phosphate mannosyltransferase subunit 1 (254 aa).

GDP-alpha-D-mannose-binding residues include Pro-25, Tyr-27, Glu-29, Val-56, Asp-58, Asp-111, Ala-112, Asp-113, Arg-140, and Arg-227. Asp-113 provides a ligand contact to Mg(2+). A Mn(2+)-binding site is contributed by Asp-113.

Belongs to the glycosyltransferase 2 family. Component of the dolichol-phosphate mannose (DPM) synthase complex composed of dpm1, dpm2 and dpm3. Mg(2+) is required as a cofactor. Mn(2+) serves as cofactor. The cofactor is Ca(2+).

Its subcellular location is the endoplasmic reticulum. It carries out the reaction a di-trans,poly-cis-dolichyl phosphate + GDP-alpha-D-mannose = a di-trans,poly-cis-dolichyl beta-D-mannosyl phosphate + GDP. The protein operates within protein modification; protein glycosylation. Its function is as follows. Transfers mannose from GDP-mannose to dolichol monophosphate to form dolichol phosphate mannose (Dol-P-Man) which is the mannosyl donor in pathways leading to N-glycosylation, glycosyl phosphatidylinositol membrane anchoring, and O-mannosylation of proteins; catalytic subunit of the dolichol-phosphate mannose (DPM) synthase complex. The chain is Dolichol-phosphate mannosyltransferase subunit 1 (dpm1) from Dictyostelium discoideum (Social amoeba).